A 200-amino-acid chain; its full sequence is Large ribosomal subunit protein bL25 (200 aa).

The protein belongs to the bacterial ribosomal protein bL25 family. CTC subfamily. In terms of assembly, part of the 50S ribosomal subunit; part of the 5S rRNA/L5/L18/L25 subcomplex. Contacts the 5S rRNA. Binds to the 5S rRNA independently of L5 and L18.

This is one of the proteins that binds to the 5S RNA in the ribosome where it forms part of the central protuberance. In Pseudomonas fluorescens (strain SBW25), this protein is Large ribosomal subunit protein bL25.